Here is a 432-residue protein sequence, read N- to C-terminus: Glutamate-1-semialdehyde 2,1-aminomutase (432 aa).

K270 carries the post-translational modification N6-(pyridoxal phosphate)lysine.

This sequence belongs to the class-III pyridoxal-phosphate-dependent aminotransferase family. HemL subfamily. Homodimer. Requires pyridoxal 5'-phosphate as cofactor.

The protein resides in the cytoplasm. The enzyme catalyses (S)-4-amino-5-oxopentanoate = 5-aminolevulinate. It participates in porphyrin-containing compound metabolism; protoporphyrin-IX biosynthesis; 5-aminolevulinate from L-glutamyl-tRNA(Glu): step 2/2. The chain is Glutamate-1-semialdehyde 2,1-aminomutase from Acinetobacter baumannii (strain ATCC 17978 / DSM 105126 / CIP 53.77 / LMG 1025 / NCDC KC755 / 5377).